The chain runs to 271 residues: Structure-specific endonuclease subunit SLX1 (271 aa).

A GIY-YIG domain is found at 9 to 94 (RFFGVYLLYC…PQASRRLTHV (86 aa)). The SLX1-type zinc-finger motif lies at 182-234 (CTLCARMLQDEEGPLCCPHPGCPLRAHIICLAEEFLQEEPGQLLPLEGHCPSC).

The protein belongs to the SLX1 family. As to quaternary structure, forms a heterodimer with SLX4. A divalent metal cation serves as cofactor.

It localises to the nucleus. In terms of biological role, catalytic subunit of the SLX1-SLX4 structure-specific endonuclease that resolves DNA secondary structures generated during DNA repair and recombination. Has endonuclease activity towards branched DNA substrates, introducing single-strand cuts in duplex DNA close to junctions with ss-DNA. Has a preference for 5'-flap structures, and promotes symmetrical cleavage of static and migrating Holliday junctions (HJs). Resolves HJs by generating two pairs of ligatable, nicked duplex products. The chain is Structure-specific endonuclease subunit SLX1 (Slx1b) from Rattus norvegicus (Rat).